We begin with the raw amino-acid sequence, 207 residues long: Vexin (207 aa).

The segment at 55–102 (LELLPHRGDRRDPGDGRRFGRLQTARPPTAHPAKASARPVGISEPKTS) is disordered. The span at 58-72 (LPHRGDRRDPGDGRR) shows a compositional bias: basic and acidic residues.

The protein belongs to the vexin family.

The protein resides in the cell membrane. It localises to the nucleus. Required for neurogenesis in the neural plate and retina. Strongly cooperates with neural bHLH factors to promote neurogenesis. This Pongo abelii (Sumatran orangutan) protein is Vexin.